The sequence spans 634 residues: Chaperone protein HtpG (634 aa).

Residues 1-342 are a; substrate-binding; the sequence is MTVETQKETL…SNDLSLNVSR (342 aa). The segment at 343–559 is b; the sequence is EILQKDPIID…EQDLGLQMRQ (217 aa). A c region spans residues 560–634; it reads ILEASGQKVP…LNKLLVELSA (75 aa).

It belongs to the heat shock protein 90 family. In terms of assembly, homodimer.

Its subcellular location is the cytoplasm. Functionally, molecular chaperone. Has ATPase activity. In Pseudomonas putida (strain ATCC 47054 / DSM 6125 / CFBP 8728 / NCIMB 11950 / KT2440), this protein is Chaperone protein HtpG.